We begin with the raw amino-acid sequence, 216 residues long: Adenylate kinase (216 aa).

ATP is bound at residue 10–15 (GAGKGT). The interval 30-59 (STGDMLRAAVKAGTELGIKAKSIMDAGGLV) is NMP. Residues T31, R36, 57–59 (GLV), 85–88 (GFPR), and Q92 contribute to the AMP site. Residues 122-159 (GRRVHEASGRVYHIVYNPPKIAGKDDITGEELVQRKDD) form an LID region. Residues R123 and 132–133 (VY) each bind ATP. Residues R156 and R167 each contribute to the AMP site. G202 contributes to the ATP binding site.

Belongs to the adenylate kinase family. Monomer.

It is found in the cytoplasm. The catalysed reaction is AMP + ATP = 2 ADP. The protein operates within purine metabolism; AMP biosynthesis via salvage pathway; AMP from ADP: step 1/1. Catalyzes the reversible transfer of the terminal phosphate group between ATP and AMP. Plays an important role in cellular energy homeostasis and in adenine nucleotide metabolism. This is Adenylate kinase from Pseudomonas fluorescens (strain Pf0-1).